Here is a 162-residue protein sequence, read N- to C-terminus: G/U mismatch-specific DNA glycosylase (162 aa).

Belongs to the uracil-DNA glycosylase (UDG) superfamily. TDG/mug family. As to quaternary structure, binds DNA as a monomer.

The protein resides in the cytoplasm. It carries out the reaction Specifically hydrolyzes mismatched double-stranded DNA and polynucleotides, releasing free uracil.. Its function is as follows. Excises ethenocytosine and uracil, which can arise by alkylation or deamination of cytosine, respectively, from the corresponding mispairs with guanine in ds-DNA. It is capable of hydrolyzing the carbon-nitrogen bond between the sugar-phosphate backbone of the DNA and the mispaired base. The complementary strand guanine functions in substrate recognition. Required for DNA damage lesion repair in stationary-phase cells. The sequence is that of G/U mismatch-specific DNA glycosylase from Serratia marcescens.